The following is a 78-amino-acid chain: Gas vesicle protein G (78 aa).

It belongs to the gas vesicle GvpG family.

It localises to the gas vesicle. Might be a minor component of the gas vesicle involved in nucleating their formation. Gas vesicles are hollow, gas filled proteinaceous nanostructures found in some microorganisms. It is not clear what function gas vesicles perform in soil bacteria. The sequence is that of Gas vesicle protein G from Streptomyces sp. (strain CB03234).